The following is a 374-amino-acid chain: Alanine racemase (374 aa).

The active-site Proton acceptor; specific for D-alanine is Lys35. Lys35 is subject to N6-(pyridoxal phosphate)lysine. Arg133 lines the substrate pocket. Tyr264 acts as the Proton acceptor; specific for L-alanine in catalysis. Met312 contacts substrate.

It belongs to the alanine racemase family. It depends on pyridoxal 5'-phosphate as a cofactor.

The enzyme catalyses L-alanine = D-alanine. Its pathway is amino-acid biosynthesis; D-alanine biosynthesis; D-alanine from L-alanine: step 1/1. In terms of biological role, catalyzes the interconversion of L-alanine and D-alanine. May also act on other amino acids. This Thermobifida fusca (strain YX) protein is Alanine racemase (alr).